We begin with the raw amino-acid sequence, 783 residues long: Tripartite motif-containing protein 67 (783 aa).

Residues Cys-7–Glu-42 form an RING-type; degenerate zinc finger. Residues Ala-206–Pro-253 form a B box-type 1; degenerate zinc finger. Residues Lys-247–Ser-295 form a disordered region. Pro residues predominate over residues Gln-252–Ala-261. The segment covering Pro-275 to Gly-293 has biased composition (gly residues). The B box-type 2 zinc finger occupies Arg-298–Leu-340. 4 residues coordinate Zn(2+): Cys-303, His-306, Cys-326, and His-332. The stretch at Lys-345–Asn-382 forms a coiled coil. The COS domain maps to Ile-448–Ile-506. A Fibronectin type-III domain is found at Pro-513 to Val-607. Residues Asn-589–Leu-780 form the B30.2/SPRY domain.

Belongs to the TRIM/RBCC family.

The protein localises to the cytoplasm. It is found in the cytoskeleton. In Homo sapiens (Human), this protein is Tripartite motif-containing protein 67 (TRIM67).